Reading from the N-terminus, the 684-residue chain is Glycine--tRNA ligase beta subunit (684 aa).

The protein belongs to the class-II aminoacyl-tRNA synthetase family. As to quaternary structure, tetramer of two alpha and two beta subunits.

The protein resides in the cytoplasm. The catalysed reaction is tRNA(Gly) + glycine + ATP = glycyl-tRNA(Gly) + AMP + diphosphate. The sequence is that of Glycine--tRNA ligase beta subunit from Pseudomonas fluorescens (strain SBW25).